The sequence spans 338 residues: Holliday junction branch migration complex subunit RuvB (338 aa).

The segment at 1-181 is large ATPase domain (RuvB-L); it reads MDRIVEIEKV…FGMDFRLQFY (181 aa). ATP is bound by residues L20, R21, G62, K65, T66, T67, 128–130, R171, Y181, and R218; that span reads EDF. T66 provides a ligand contact to Mg(2+). A small ATPAse domain (RuvB-S) region spans residues 182-252; that stretch reads STAELSRIIQ…RAKEGLNALG (71 aa). A head domain (RuvB-H) region spans residues 255-338; the sequence is SLGFDEMDIK…NRTKGLFDGE (84 aa). Residues R309 and R314 each coordinate DNA.

The protein belongs to the RuvB family. Homohexamer. Forms an RuvA(8)-RuvB(12)-Holliday junction (HJ) complex. HJ DNA is sandwiched between 2 RuvA tetramers; dsDNA enters through RuvA and exits via RuvB. An RuvB hexamer assembles on each DNA strand where it exits the tetramer. Each RuvB hexamer is contacted by two RuvA subunits (via domain III) on 2 adjacent RuvB subunits; this complex drives branch migration. In the full resolvosome a probable DNA-RuvA(4)-RuvB(12)-RuvC(2) complex forms which resolves the HJ.

The protein localises to the cytoplasm. The enzyme catalyses ATP + H2O = ADP + phosphate + H(+). Functionally, the RuvA-RuvB-RuvC complex processes Holliday junction (HJ) DNA during genetic recombination and DNA repair, while the RuvA-RuvB complex plays an important role in the rescue of blocked DNA replication forks via replication fork reversal (RFR). RuvA specifically binds to HJ cruciform DNA, conferring on it an open structure. The RuvB hexamer acts as an ATP-dependent pump, pulling dsDNA into and through the RuvAB complex. RuvB forms 2 homohexamers on either side of HJ DNA bound by 1 or 2 RuvA tetramers; 4 subunits per hexamer contact DNA at a time. Coordinated motions by a converter formed by DNA-disengaged RuvB subunits stimulates ATP hydrolysis and nucleotide exchange. Immobilization of the converter enables RuvB to convert the ATP-contained energy into a lever motion, pulling 2 nucleotides of DNA out of the RuvA tetramer per ATP hydrolyzed, thus driving DNA branch migration. The RuvB motors rotate together with the DNA substrate, which together with the progressing nucleotide cycle form the mechanistic basis for DNA recombination by continuous HJ branch migration. Branch migration allows RuvC to scan DNA until it finds its consensus sequence, where it cleaves and resolves cruciform DNA. This Campylobacter curvus (strain 525.92) protein is Holliday junction branch migration complex subunit RuvB.